The sequence spans 261 residues: MSRVADTIARRKGEAAGALIGYLPAGFPDLRTSVDAAVALAENGVDVIELGLPYSDPVMDGAVIQAATQRALANGFRLRDGFAAVREITSRVDAPVLVMTYWNPVMQYGVDRFADDFATAGGAGLITPDLIPDEGADWLAASERTGLDRVFLAAPSSTEARRRQTAANSRGFVYAVSTMGITGVRTDVDAAARTLVGRLREAGALSACVGLGISSAAQVAEVLDYADGAIVGSALVTALAKGGVAAAGRIAAELARGAVRG.

Residues glutamate 49 and aspartate 60 each act as proton acceptor in the active site.

It belongs to the TrpA family. In terms of assembly, tetramer of two alpha and two beta chains.

It catalyses the reaction (1S,2R)-1-C-(indol-3-yl)glycerol 3-phosphate + L-serine = D-glyceraldehyde 3-phosphate + L-tryptophan + H2O. The protein operates within amino-acid biosynthesis; L-tryptophan biosynthesis; L-tryptophan from chorismate: step 5/5. Its function is as follows. The alpha subunit is responsible for the aldol cleavage of indoleglycerol phosphate to indole and glyceraldehyde 3-phosphate. This chain is Tryptophan synthase alpha chain, found in Leifsonia xyli subsp. xyli (strain CTCB07).